Here is a 147-residue protein sequence, read N- to C-terminus: SsrA-binding protein (147 aa).

This sequence belongs to the SmpB family.

It is found in the cytoplasm. Functionally, required for rescue of stalled ribosomes mediated by trans-translation. Binds to transfer-messenger RNA (tmRNA), required for stable association of tmRNA with ribosomes. tmRNA and SmpB together mimic tRNA shape, replacing the anticodon stem-loop with SmpB. tmRNA is encoded by the ssrA gene; the 2 termini fold to resemble tRNA(Ala) and it encodes a 'tag peptide', a short internal open reading frame. During trans-translation Ala-aminoacylated tmRNA acts like a tRNA, entering the A-site of stalled ribosomes, displacing the stalled mRNA. The ribosome then switches to translate the ORF on the tmRNA; the nascent peptide is terminated with the 'tag peptide' encoded by the tmRNA and targeted for degradation. The ribosome is freed to recommence translation, which seems to be the essential function of trans-translation. The chain is SsrA-binding protein from Thermosipho melanesiensis (strain DSM 12029 / CIP 104789 / BI429).